The sequence spans 259 residues: UPF0246 protein NGO_0461 (259 aa).

This sequence belongs to the UPF0246 family.

The chain is UPF0246 protein NGO_0461 from Neisseria gonorrhoeae (strain ATCC 700825 / FA 1090).